The primary structure comprises 955 residues: Glutamyl aminopeptidase (955 aa).

Topologically, residues 1 to 17 (MDIEDKTSKMHCMKGKH) are cytoplasmic. A helical; Signal-anchor for type II membrane protein membrane pass occupies residues 18-38 (VVIICGVVIAVGLILGLGLGL). At 39 to 955 (GLDTKACNPP…LENSEHSNFA (917 aa)) the chain is on the extracellular side. N-linked (GlcNAc...) asparagine glycosylation is found at N118 and N192. E218 is a binding site for substrate. N319 and N335 each carry an N-linked (GlcNAc...) asparagine glycan. 352 to 356 (GAMEN) is a substrate binding site. H388 contributes to the Zn(2+) binding site. The Proton acceptor role is filled by E389. Zn(2+) is bound by residues H392 and E411. 8 N-linked (GlcNAc...) asparagine glycosylation sites follow: N458, N547, N584, N592, N674, N759, N823, and N836. R882 is a substrate binding site.

This sequence belongs to the peptidase M1 family. Homodimer; disulfide-linked. Zn(2+) serves as cofactor. In terms of processing, N-glycosylated. Glycosylation counts for an increased mass of about 32% of the protein mass (about 48 kDa).

The protein resides in the cell membrane. The catalysed reaction is Release of N-terminal glutamate (and to a lesser extent aspartate) from a peptide.. Its activity is regulated as follows. Substrate specificity is modulated by calcium which enhances the enzymatic activity for cleavage of acidic residues while reducing its activity with neutral and basic residues. Hydrolytic activity is inhibited by the aminopeptidase inhibitor (Leu and acidic inhibitor) amastatin, but not by bestatin (aminopeptidase inhibitor Leu inhibitor), leupeptin, pepstatin A and PMSF. Its hydrolytic activity is also strongly reduced by zinc ions, with a complete inhibition at 0.5 mM, and moderately inhibited by cobalt and copper ions. In terms of biological role, venom protein that cleaves N-terminal acidic residues from peptides with high potency in presence of calcium. It may have several roles in venom including alteration of blood pressure by cleaving circulating angiotensin-2, general degradation of host tissue, increase of permeability to other venom components, and/or processing of other toxins in the venom. This Bitis rhinoceros (West African gaboon viper) protein is Glutamyl aminopeptidase.